A 186-amino-acid chain; its full sequence is Adenine phosphoribosyltransferase (186 aa).

Belongs to the purine/pyrimidine phosphoribosyltransferase family. As to quaternary structure, homodimer.

It localises to the cytoplasm. The catalysed reaction is AMP + diphosphate = 5-phospho-alpha-D-ribose 1-diphosphate + adenine. Its pathway is purine metabolism; AMP biosynthesis via salvage pathway; AMP from adenine: step 1/1. Catalyzes a salvage reaction resulting in the formation of AMP, that is energically less costly than de novo synthesis. The protein is Adenine phosphoribosyltransferase of Xanthomonas oryzae pv. oryzae (strain PXO99A).